A 140-amino-acid chain; its full sequence is Large ribosomal subunit protein uL13 (140 aa).

The protein belongs to the universal ribosomal protein uL13 family. As to quaternary structure, part of the 50S ribosomal subunit.

Its function is as follows. This protein is one of the early assembly proteins of the 50S ribosomal subunit, although it is not seen to bind rRNA by itself. It is important during the early stages of 50S assembly. In Sulfurimonas denitrificans (strain ATCC 33889 / DSM 1251) (Thiomicrospira denitrificans (strain ATCC 33889 / DSM 1251)), this protein is Large ribosomal subunit protein uL13.